The chain runs to 284 residues: Formamidopyrimidine-DNA glycosylase (284 aa).

Residue proline 2 is the Schiff-base intermediate with DNA of the active site. Residue glutamate 3 is the Proton donor of the active site. The active-site Proton donor; for beta-elimination activity is lysine 58. Positions 101, 120, and 163 each coordinate DNA. Residues arginine 248 to arginine 284 form an FPG-type zinc finger. Arginine 274 acts as the Proton donor; for delta-elimination activity in catalysis.

The protein belongs to the FPG family. Monomer. Requires Zn(2+) as cofactor.

It carries out the reaction Hydrolysis of DNA containing ring-opened 7-methylguanine residues, releasing 2,6-diamino-4-hydroxy-5-(N-methyl)formamidopyrimidine.. It catalyses the reaction 2'-deoxyribonucleotide-(2'-deoxyribose 5'-phosphate)-2'-deoxyribonucleotide-DNA = a 3'-end 2'-deoxyribonucleotide-(2,3-dehydro-2,3-deoxyribose 5'-phosphate)-DNA + a 5'-end 5'-phospho-2'-deoxyribonucleoside-DNA + H(+). Its function is as follows. Involved in base excision repair of DNA damaged by oxidation or by mutagenic agents. Acts as a DNA glycosylase that recognizes and removes damaged bases. Has a preference for oxidized purines, such as 7,8-dihydro-8-oxoguanine (8-oxoG). Has AP (apurinic/apyrimidinic) lyase activity and introduces nicks in the DNA strand. Cleaves the DNA backbone by beta-delta elimination to generate a single-strand break at the site of the removed base with both 3'- and 5'-phosphates. The protein is Formamidopyrimidine-DNA glycosylase of Dinoroseobacter shibae (strain DSM 16493 / NCIMB 14021 / DFL 12).